The following is a 417-amino-acid chain: D-amino acid dehydrogenase (417 aa).

Position 3–17 (I3–Y17) interacts with FAD.

It belongs to the DadA oxidoreductase family. The cofactor is FAD.

It catalyses the reaction a D-alpha-amino acid + A + H2O = a 2-oxocarboxylate + AH2 + NH4(+). The protein operates within amino-acid degradation; D-alanine degradation; NH(3) and pyruvate from D-alanine: step 1/1. In terms of biological role, oxidative deamination of D-amino acids. In Azorhizobium caulinodans (strain ATCC 43989 / DSM 5975 / JCM 20966 / LMG 6465 / NBRC 14845 / NCIMB 13405 / ORS 571), this protein is D-amino acid dehydrogenase.